The chain runs to 456 residues: Antigen Lp49 (456 aa).

Residues 1–34 form the signal peptide; that stretch reads MNSNPKKKFLKLIKIKSDIILLIPIFLFLVCCKS. A disulfide bridge connects residues cysteine 346 and cysteine 347.

The protein localises to the cell outer membrane. Its function is as follows. May be involved in virulence. Binds human plasminogen (PLG) and stimulates its proteolytic cleavage to enzymatically active plasmin in the presence of an urokinase-type PLG activator in vitro. Activated plasmin has proteolytic activity which may help the bacteria to spread throughout the host by degrading extracellular matrix components, facilitating tissue penetration and invasion. This is Antigen Lp49 from Leptospira interrogans serogroup Icterohaemorrhagiae serovar copenhageni (strain Fiocruz L1-130).